Reading from the N-terminus, the 84-residue chain is Small ribosomal subunit protein bS16 (84 aa).

Belongs to the bacterial ribosomal protein bS16 family.

The sequence is that of Small ribosomal subunit protein bS16 from Desulforapulum autotrophicum (strain ATCC 43914 / DSM 3382 / VKM B-1955 / HRM2) (Desulfobacterium autotrophicum).